Consider the following 630-residue polypeptide: Plastin-3 (630 aa).

EF-hand domains are found at residues 12–47 and 52–87; these read DELDELKEAFAKVDLNSNGFICDYELHELFKEANMP and KVREIIQKLMLDGDRNKDGKISFNEFVYIFQEVKSS. Ca(2+) contacts are provided by D25, N27, N29, E36, D65, N67, D69, K71, and E76. Actin-binding stretches follow at residues 109 to 382 and 383 to 627; these read TSEL…ALTK and PENQ…GRGM. 2 Calponin-homology (CH) domains span residues 123–239 and 267–378; these read EEEK…KIGL and LSPE…NKYP. Phosphoserine occurs at positions 268, 293, 326, and 339. Phosphothreonine is present on T391. Calponin-homology (CH) domains follow at residues 397–506 and 518–627; these read TREE…RRYT and KATD…GRGM.

Monomer.

Its subcellular location is the cytoplasm. Functionally, actin-bundling protein. This is Plastin-3 (Pls3) from Rattus norvegicus (Rat).